A 1392-amino-acid polypeptide reads, in one-letter code: FERM and PDZ domain-containing protein 2 (1392 aa).

One can recognise a KIND domain in the interval 15 to 197 (VTLASALQVR…SEVERRVVEE (183 aa)). The segment at 211-246 (SRLHQADGESPGAPASDALQPRRVSERSAETQSSLE) is disordered. The FERM domain maps to 342–642 (CVVLLNGRCL…WFNAQTGSKH (301 aa)). Residues 775–861 (GLFGEPNQDI…MAVRMIQNSP (87 aa)) enclose the PDZ 1 domain. The tract at residues 903 to 930 (GRQSPHIHDQDRSVRGTEMAQGAGSCPP) is disordered. Over residues 908–917 (HIHDQDRSVR) the composition is skewed to basic and acidic residues. An interaction with GRIN2A and GRIN2B region spans residues 937–1027 (TGEIYFVELV…VARLVLERRG (91 aa)). PDZ domains follow at residues 950–1035 (GTLG…PQCP) and 1079–1167 (RGLG…PEME). Positions 1186–1236 (CAGSEQSPSLDQEDNWRDSTSLDAGEGLSPGPESSYKDVRQVKGDREKERP) are disordered. A compositionally biased stretch (basic and acidic residues) spans 1220-1236 (SYKDVRQVKGDREKERP).

In terms of assembly, interacts (via the second PDZ domain) with CTNND2 (via the extreme C-terminus). Interacts (via the second PDZ domain) with PKP4 (via the extreme C-terminus); the interaction directs FRMPD2 to the basolateral membranes. Interacts (via the second PDZ domain) with ARVCF (via the extreme C-terminus). Interacts (via the second PDZ domain) with NMDAR subunits GRIN2A/GLUN2A and GRIN2B/GLUN2B (via the extreme C-terminus); the interaction is direct and is likely to promote NMDAR-mediated neural signal transmission. Binds GRIN2A with lower affinity than GRIN2B. Interacts (via the third PDZ domain) with LRIT1 (via the extreme C-terminus); the interaction leads to their colocalization in photoreceptor synapses. Interacts with NOD2; the interaction is likely to trigger NOD2-mediated nuclear factor kappaB activation.

The protein resides in the cytoplasm. The protein localises to the postsynaptic density. Its subcellular location is the basolateral cell membrane. It is found in the cell junction. It localises to the tight junction. Its function is as follows. Functions as a scaffold protein and likely plays a role in N-methyl-D-aspartic acid receptor (NMDAR)-mediated synaptic excitatory transmission. May be involved in synapse formation in cone photoreceptor cells. May play a role in the regulation of tight junction formation. Binds phosphatidylinositol 3,4-bisphosphate (PtdIns(3,4)P2). May pNF-kappa-Blay a role in the regulation of NOD2-mediated NF-kappa-B activation in immune response. The protein is FERM and PDZ domain-containing protein 2 of Mus musculus (Mouse).